The chain runs to 196 residues: Nucleoside triphosphate pyrophosphatase (196 aa).

D73 (proton acceptor) is an active-site residue.

This sequence belongs to the Maf family. A divalent metal cation serves as cofactor.

It is found in the cytoplasm. The enzyme catalyses a ribonucleoside 5'-triphosphate + H2O = a ribonucleoside 5'-phosphate + diphosphate + H(+). The catalysed reaction is a 2'-deoxyribonucleoside 5'-triphosphate + H2O = a 2'-deoxyribonucleoside 5'-phosphate + diphosphate + H(+). In terms of biological role, nucleoside triphosphate pyrophosphatase. May have a dual role in cell division arrest and in preventing the incorporation of modified nucleotides into cellular nucleic acids. This chain is Nucleoside triphosphate pyrophosphatase, found in Anaplasma marginale (strain Florida).